The following is a 253-amino-acid chain: uncharacterized protein (253 aa).

Positions 17, 36, 62, 89, 123, 158, 162, 191, and 193 each coordinate NADP(+). Tyr158 (proton acceptor) is an active-site residue. The active-site Lowers pKa of active site Tyr is the Lys162.

The protein belongs to the short-chain dehydrogenases/reductases (SDR) family.

The protein resides in the cytoplasm. Its subcellular location is the nucleus. This is an uncharacterized protein from Schizosaccharomyces pombe (strain 972 / ATCC 24843) (Fission yeast).